The sequence spans 356 residues: Protein RecA (356 aa).

67–74 (GPESSGKT) contributes to the ATP binding site.

This sequence belongs to the RecA family.

Its subcellular location is the cytoplasm. Its function is as follows. Can catalyze the hydrolysis of ATP in the presence of single-stranded DNA, the ATP-dependent uptake of single-stranded DNA by duplex DNA, and the ATP-dependent hybridization of homologous single-stranded DNAs. It interacts with LexA causing its activation and leading to its autocatalytic cleavage. This is Protein RecA from Yersinia pestis (strain Pestoides F).